Consider the following 362-residue polypeptide: Homoisocitrate dehydrogenase (362 aa).

Residue 79–81 (VQS) coordinates NADH. Ser81 lines the (2R,3S)-homoisocitrate pocket. Phosphoserine occurs at positions 81 and 91. The (2R,3S)-homoisocitrate site is built by Arg97, Arg107, Arg126, Tyr133, Lys196, and Asn198. Asn198 is an NADH binding site. Residues Asp232, Asp256, and Asp260 each contribute to the Mg(2+) site. NADH is bound by residues 289 to 293 (GSAPD) and Asn301.

This sequence belongs to the isocitrate and isopropylmalate dehydrogenases family. Requires Mg(2+) as cofactor.

The protein resides in the cytoplasm. It catalyses the reaction (2R,3S)-homoisocitrate + NAD(+) = 2-oxoadipate + CO2 + NADH. It functions in the pathway amino-acid biosynthesis; L-lysine biosynthesis via AAA pathway; L-alpha-aminoadipate from 2-oxoglutarate: step 4/5. This Schizosaccharomyces pombe (strain 972 / ATCC 24843) (Fission yeast) protein is Homoisocitrate dehydrogenase (lys12).